The following is a 278-amino-acid chain: Dermonecrotic toxin LspiSicTox-betaIE2i (278 aa).

Histidine 5 is a catalytic residue. Mg(2+) is bound by residues glutamate 25 and aspartate 27. The Nucleophile role is filled by histidine 41. Cystine bridges form between cysteine 45–cysteine 51 and cysteine 47–cysteine 190. Glutamate 85 lines the Mg(2+) pocket.

The protein belongs to the arthropod phospholipase D family. Class II subfamily. The cofactor is Mg(2+). Expressed by the venom gland.

It is found in the secreted. It carries out the reaction an N-(acyl)-sphingosylphosphocholine = an N-(acyl)-sphingosyl-1,3-cyclic phosphate + choline. It catalyses the reaction an N-(acyl)-sphingosylphosphoethanolamine = an N-(acyl)-sphingosyl-1,3-cyclic phosphate + ethanolamine. The catalysed reaction is a 1-acyl-sn-glycero-3-phosphocholine = a 1-acyl-sn-glycero-2,3-cyclic phosphate + choline. The enzyme catalyses a 1-acyl-sn-glycero-3-phosphoethanolamine = a 1-acyl-sn-glycero-2,3-cyclic phosphate + ethanolamine. Dermonecrotic toxins cleave the phosphodiester linkage between the phosphate and headgroup of certain phospholipids (sphingolipid and lysolipid substrates), forming an alcohol (often choline) and a cyclic phosphate. This toxin acts on sphingomyelin (SM). It may also act on ceramide phosphoethanolamine (CPE), lysophosphatidylcholine (LPC) and lysophosphatidylethanolamine (LPE), but not on lysophosphatidylserine (LPS), and lysophosphatidylglycerol (LPG). It acts by transphosphatidylation, releasing exclusively cyclic phosphate products as second products. Induces dermonecrosis, hemolysis, increased vascular permeability, edema, inflammatory response, and platelet aggregation. The chain is Dermonecrotic toxin LspiSicTox-betaIE2i from Loxosceles spinulosa (Recluse spider).